We begin with the raw amino-acid sequence, 307 residues long: D-alanine--D-alanine ligase (307 aa).

The region spanning 104 to 301 is the ATP-grasp domain; sequence RTAFLAAGLP…FVSLCRWMVE (198 aa). 130–183 contacts ATP; it reads PLPRPFVIKPANEGSAVGVHILHEGDNRRTEIARSWSFGGQALVEEYIPGRELT. Mg(2+) is bound by residues Asp251, Glu268, and Asn270.

Belongs to the D-alanine--D-alanine ligase family. The cofactor is Mg(2+). Mn(2+) serves as cofactor.

The protein localises to the cytoplasm. The enzyme catalyses 2 D-alanine + ATP = D-alanyl-D-alanine + ADP + phosphate + H(+). It functions in the pathway cell wall biogenesis; peptidoglycan biosynthesis. Functionally, cell wall formation. In Granulibacter bethesdensis (strain ATCC BAA-1260 / CGDNIH1), this protein is D-alanine--D-alanine ligase.